The sequence spans 267 residues: Protein I267L (267 aa).

The protein belongs to the asfivirus I267L family.

In African swine fever virus (isolate Tick/Malawi/Lil 20-1/1983) (ASFV), this protein is Protein I267L.